Reading from the N-terminus, the 161-residue chain is RNA pyrophosphohydrolase (161 aa).

The Nudix hydrolase domain occupies 12 to 154 (PYRPGVGMMI…KRKLYQAVVK (143 aa)). A Nudix box motif is present at residues 46 to 67 (GGIVPGETPSIAAMREMLEEIG).

This sequence belongs to the Nudix hydrolase family. RppH subfamily. The cofactor is a divalent metal cation.

Functionally, accelerates the degradation of transcripts by removing pyrophosphate from the 5'-end of triphosphorylated RNA, leading to a more labile monophosphorylated state that can stimulate subsequent ribonuclease cleavage. The chain is RNA pyrophosphohydrolase from Rickettsia africae (strain ESF-5).